Here is a 146-residue protein sequence, read N- to C-terminus: Probable flagellum biosynthesis repressor protein FlbT 1 (146 aa).

It belongs to the FlbT family.

Has a post-transcriptional repressor function in flagellum biogenesis. Associates with the 5'-UTR of fljK mRNA and promotes its degradation. The chain is Probable flagellum biosynthesis repressor protein FlbT 1 from Bradyrhizobium diazoefficiens (strain JCM 10833 / BCRC 13528 / IAM 13628 / NBRC 14792 / USDA 110).